Here is a 428-residue protein sequence, read N- to C-terminus: CinA-like protein (428 aa).

It belongs to the CinA family.

This chain is CinA-like protein, found in Gemmatimonas aurantiaca (strain DSM 14586 / JCM 11422 / NBRC 100505 / T-27).